Here is a 264-residue protein sequence, read N- to C-terminus: tRNA pseudouridine synthase A (264 aa).

Residue Asp-51 is the Nucleophile of the active site. Residue Tyr-109 participates in substrate binding.

This sequence belongs to the tRNA pseudouridine synthase TruA family. As to quaternary structure, homodimer.

The catalysed reaction is uridine(38/39/40) in tRNA = pseudouridine(38/39/40) in tRNA. Functionally, formation of pseudouridine at positions 38, 39 and 40 in the anticodon stem and loop of transfer RNAs. This chain is tRNA pseudouridine synthase A, found in Actinobacillus succinogenes (strain ATCC 55618 / DSM 22257 / CCUG 43843 / 130Z).